We begin with the raw amino-acid sequence, 28 residues long: Antibacterial protein LC3 (28 aa).

Its function is as follows. Antibacterial activity against X.campestris, especially strain G, and P.solacearum PO1. This is Antibacterial protein LC3 from Bacillus subtilis.